Here is a 577-residue protein sequence, read N- to C-terminus: ABC transporter G family member 4 (577 aa).

One can recognise an ABC transporter domain in the interval 6-248 (LSTSSISYAK…LLSKGFTVPS (243 aa)). An ATP-binding site is contributed by 48 to 55 (GPSGAGKS). The region spanning 299 to 509 (TEISLLSSRF…ALDALLINEY (211 aa)) is the ABC transmembrane type-2 domain. Helical transmembrane passes span 318–338 (LLLT…TIYL), 353–373 (LFAF…PIFI), 400–420 (VFLP…YFLV), 429–449 (LAYF…FVLF), 458–478 (IAGT…SGYF), 487–507 (YWLF…LLIN), and 548–568 (FNVY…FLVL).

The protein belongs to the ABC transporter superfamily. ABCG family. Eye pigment precursor importer (TC 3.A.1.204) subfamily.

It localises to the membrane. In Arabidopsis thaliana (Mouse-ear cress), this protein is ABC transporter G family member 4 (ABCG4).